Consider the following 309-residue polypeptide: Sulfur oxygenase/reductase (309 aa).

A Cysteine persulfide modification is found at cysteine 31. Fe cation contacts are provided by histidine 86, histidine 90, and glutamate 114.

As to quaternary structure, homoicosatetramer. The resulting structure is a hollow sphere where catalysis takes place in the inside cavity. Fe cation serves as cofactor.

Its subcellular location is the cytoplasm. It carries out the reaction 4 sulfur + O2 + 4 H2O = 2 hydrogen sulfide + 2 sulfite + 6 H(+). With respect to regulation, inhibited by zinc. In terms of biological role, catalyzes the simultaneous oxidation and reduction of elemental sulfur in the presence of oxygen, with sulfite and hydrogen sulfide as products. The chain is Sulfur oxygenase/reductase (sor) from Acidianus ambivalens (Desulfurolobus ambivalens).